The chain runs to 382 residues: Queuine tRNA-ribosyltransferase (382 aa).

D89 functions as the Proton acceptor in the catalytic mechanism. Substrate is bound by residues 89–93, D143, Q187, and G214; that span reads DSGGF. The segment at 245–251 is RNA binding; that stretch reads GVGKPED. The active-site Nucleophile is D264. The RNA binding; important for wobble base 34 recognition stretch occupies residues 269 to 273; sequence TRNAR. C302, C304, C307, and H333 together coordinate Zn(2+).

Belongs to the queuine tRNA-ribosyltransferase family. Homodimer. Within each dimer, one monomer is responsible for RNA recognition and catalysis, while the other monomer binds to the replacement base PreQ1. Requires Zn(2+) as cofactor.

It carries out the reaction 7-aminomethyl-7-carbaguanine + guanosine(34) in tRNA = 7-aminomethyl-7-carbaguanosine(34) in tRNA + guanine. It functions in the pathway tRNA modification; tRNA-queuosine biosynthesis. Functionally, catalyzes the base-exchange of a guanine (G) residue with the queuine precursor 7-aminomethyl-7-deazaguanine (PreQ1) at position 34 (anticodon wobble position) in tRNAs with GU(N) anticodons (tRNA-Asp, -Asn, -His and -Tyr). Catalysis occurs through a double-displacement mechanism. The nucleophile active site attacks the C1' of nucleotide 34 to detach the guanine base from the RNA, forming a covalent enzyme-RNA intermediate. The proton acceptor active site deprotonates the incoming PreQ1, allowing a nucleophilic attack on the C1' of the ribose to form the product. After dissociation, two additional enzymatic reactions on the tRNA convert PreQ1 to queuine (Q), resulting in the hypermodified nucleoside queuosine (7-(((4,5-cis-dihydroxy-2-cyclopenten-1-yl)amino)methyl)-7-deazaguanosine). The protein is Queuine tRNA-ribosyltransferase of Sodalis glossinidius (strain morsitans).